Reading from the N-terminus, the 328-residue chain is Phosphate acyltransferase (328 aa).

This sequence belongs to the PlsX family. In terms of assembly, homodimer. Probably interacts with PlsY.

It localises to the cytoplasm. The enzyme catalyses a fatty acyl-[ACP] + phosphate = an acyl phosphate + holo-[ACP]. It participates in lipid metabolism; phospholipid metabolism. Its function is as follows. Catalyzes the reversible formation of acyl-phosphate (acyl-PO(4)) from acyl-[acyl-carrier-protein] (acyl-ACP). This enzyme utilizes acyl-ACP as fatty acyl donor, but not acyl-CoA. The sequence is that of Phosphate acyltransferase from Geobacillus thermodenitrificans (strain NG80-2).